A 496-amino-acid polypeptide reads, in one-letter code: Docking protein 3 (496 aa).

Positions 18–38 are disordered; the sequence is LSLDGGTGSGQKGKCEEFPSS. The PH domain occupies 63–179; it reads PIKDGILYQQ…WMGPICQLAF (117 aa). The residue at position 194 (S194) is a Phosphoserine. The IRS-type PTB domain occupies 213-317; that stretch reads EVGEFPVVVQ…ARQRERLPEL (105 aa). The disordered stretch occupies residues 313 to 363; it reads RLPELTRPQPCPLPRATSLPSLDTPGELREMPPGPEPPTSRKMHLAEPGPQ. S330 and S364 each carry phosphoserine. Position 381 is a phosphotyrosine (Y381). The disordered stretch occupies residues 408–447; that stretch reads PTLHGGEPEPHEGPGSRSPTTSPIYHNGQDLSWPGPANDS. The residue at position 425 (S425) is a Phosphoserine.

The protein belongs to the DOK family. Type A subfamily. As to quaternary structure, on tyrosine phosphorylation, interacts with CSK and INPP5D/SHIP1 via their SH2 domains. Both Tyr-381 and Tyr-398 are required for interaction with INPP5D. Only Tyr-381 is required for interaction with CSK. Binds ABL1 through the PTB domain and in a kinase-dependent manner. Does not interact with RasGAP. In terms of processing, constitutively tyrosine-phosphorylated. Post-translationally, on IL2 stimulation, phosphorylated on C-terminal tyrosine residues possibly by Src kinases. Can also be phosphorylated by ABL1 kinase. In terms of tissue distribution, expressed in spleen.

The protein resides in the cytoplasm. It localises to the cell membrane. Functionally, DOK proteins are enzymatically inert adaptor or scaffolding proteins. They provide a docking platform for the assembly of multimolecular signaling complexes. DOK3 is a negative regulator of JNK signaling in B-cells through interaction with INPP5D/SHIP1. May modulate ABL1 function. This Homo sapiens (Human) protein is Docking protein 3 (DOK3).